Consider the following 1038-residue polypeptide: Isoleucine--tRNA ligase (1038 aa).

The 'HIGH' region signature appears at 48–58; that stretch reads PTANGKPHVGH. Positions 590 to 594 match the 'KMSKS' region motif; the sequence is KMSKS. Residue K593 participates in ATP binding.

It belongs to the class-I aminoacyl-tRNA synthetase family. IleS type 2 subfamily. Monomer. It depends on Zn(2+) as a cofactor.

It localises to the cytoplasm. The catalysed reaction is tRNA(Ile) + L-isoleucine + ATP = L-isoleucyl-tRNA(Ile) + AMP + diphosphate. Its function is as follows. Catalyzes the attachment of isoleucine to tRNA(Ile). As IleRS can inadvertently accommodate and process structurally similar amino acids such as valine, to avoid such errors it has two additional distinct tRNA(Ile)-dependent editing activities. One activity is designated as 'pretransfer' editing and involves the hydrolysis of activated Val-AMP. The other activity is designated 'posttransfer' editing and involves deacylation of mischarged Val-tRNA(Ile). The chain is Isoleucine--tRNA ligase from Clostridium novyi (strain NT).